The primary structure comprises 345 residues: Cytoplasmic envelopment protein 2 (345 aa).

Residues 26-35 (KLVGKSRKHR) are nuclear localization signal 1. The segment at 55–63 (CILCQLLLL) is nuclear export signal. The tract at residues 90-94 (RRRRR) is nuclear localization signal 2.

This sequence belongs to the herpesviridae cytoplasmic envelopment protein 2 family. Interacts with cytoplasmic envelopment protein 3 and with the capsid. Interacts with host STING1; this interaction prevents viral DNA-triggered antiviral immune response.

It is found in the virion tegument. The protein resides in the host cytoplasm. It localises to the host nucleus. In terms of biological role, plays a critical role in cytoplasmic virus egress. Participates in the final step of tegumentation and envelope acquisition within the host cytoplasm by directly interacting with the capsid. Upon virion binding to target cell, a signaling cascade is triggered to disrupt the interaction with the capsid, thereby preparing capsid uncoating. Additionally, antagonizes the viral DNA-triggered antiviral immune response by targeting host STING1 and preventing its dimerization and trafficking. This is Cytoplasmic envelopment protein 2 (UL94) from Human cytomegalovirus (strain AD169) (HHV-5).